The sequence spans 603 residues: uncharacterized protein (603 aa).

The region spanning 1–93 (MSFVIAAPET…AGAYASAEAA (93 aa)) is the PE domain. The interval 309–333 (GIFTGNGGTGGTGGTGTGNQLVGGE) is disordered.

This sequence belongs to the mycobacterial PE family. PGRS subfamily.

This is an uncharacterized protein from Mycobacterium tuberculosis (strain CDC 1551 / Oshkosh).